The following is a 952-amino-acid chain: UvrABC system protein A (952 aa).

38-45 (GLSGSGKS) provides a ligand contact to ATP. The C4-type zinc-finger motif lies at 259–286 (CDKCGFSISELEPRLFSFNSPLGSCSYC). ABC transporter domains are found at residues 316–595 (FKNI…SNSI) and 615–944 (GNGK…QYLS). Position 647-654 (647-654 (GVSGSGKS)) interacts with ATP. The C4-type zinc finger occupies 746-772 (CDKCFGDGVIRIEMHFLPDVYVKCEVC).

It belongs to the ABC transporter superfamily. UvrA family. Forms a heterotetramer with UvrB during the search for lesions.

The protein resides in the cytoplasm. Its function is as follows. The UvrABC repair system catalyzes the recognition and processing of DNA lesions. UvrA is an ATPase and a DNA-binding protein. A damage recognition complex composed of 2 UvrA and 2 UvrB subunits scans DNA for abnormalities. When the presence of a lesion has been verified by UvrB, the UvrA molecules dissociate. This chain is UvrABC system protein A, found in Mycoplasma genitalium (strain ATCC 33530 / DSM 19775 / NCTC 10195 / G37) (Mycoplasmoides genitalium).